Consider the following 533-residue polypeptide: Probable ADP-ribosylation factor-binding protein C25H2.16c (533 aa).

The VHS domain maps to 15–151; the sequence is ATEPYAFEPD…LLSYKGYTFP (137 aa). Residues 178–305 enclose the GAT domain; that stretch reads REAMSAKLQE…LLTQYDHLLE (128 aa). At Ser-320 the chain carries Phosphoserine. The GAE domain maps to 417–532; the sequence is NNFTSTCAFE…EYTGQSSIRL (116 aa).

It belongs to the GGA protein family.

The protein localises to the golgi apparatus. It is found in the trans-Golgi network. Its function is as follows. May play a role in the regulation of membrane traffic through the trans-Golgi network. The chain is Probable ADP-ribosylation factor-binding protein C25H2.16c from Schizosaccharomyces pombe (strain 972 / ATCC 24843) (Fission yeast).